Reading from the N-terminus, the 248-residue chain is Pulmonary surfactant-associated protein A (248 aa).

The signal sequence occupies residues 1-20 (MSLCSLAFTLFLTVVAGIKC). In terms of domain architecture, Collagen-like spans 28–100 (GSPGIPGAPG…PGERGLPGFP (73 aa)). 4-hydroxyproline is present on residues P30, P33, P36, P42, P54, P57, P63, P67, P70, and P76. Residues 31-99 (GIPGAPGNHG…EPGERGLPGF (69 aa)) form a disordered region. A compositionally biased stretch (basic and acidic residues) spans 42-51 (PGRDGRDGVK). Residues 54 to 65 (PGPPGPMGPPGG) are compositionally biased toward pro residues. The span at 69–82 (LPGRDGLPGAPGAP) shows a compositional bias: low complexity. A compositionally biased stretch (basic and acidic residues) spans 84-93 (ERGDKGEPGE). The region spanning 133–248 (SVGDKVFSTN…LQYRLAVCEF (116 aa)) is the C-type lectin domain. Disulfide bonds link C155-C246 and C224-C238. Residue N207 is glycosylated (N-linked (GlcNAc...) asparagine). The Ca(2+) site is built by E215, R217, N234, and D235.

The protein belongs to the SFTPA family. In terms of assembly, oligomeric complex of 6 set of homotrimers.

It is found in the secreted. It localises to the extracellular space. Its subcellular location is the extracellular matrix. The protein localises to the surface film. In presence of calcium ions, it binds to surfactant phospholipids and contributes to lower the surface tension at the air-liquid interface in the alveoli of the mammalian lung and is essential for normal respiration. Enhances the expression of MYO18A/SP-R210 on alveolar macrophages. This Rattus norvegicus (Rat) protein is Pulmonary surfactant-associated protein A (Sftpa1).